The chain runs to 366 residues: Phospho-2-dehydro-3-deoxyheptonate aldolase (366 aa).

The protein belongs to the class-I DAHP synthase family.

It catalyses the reaction D-erythrose 4-phosphate + phosphoenolpyruvate + H2O = 7-phospho-2-dehydro-3-deoxy-D-arabino-heptonate + phosphate. It functions in the pathway metabolic intermediate biosynthesis; chorismate biosynthesis; chorismate from D-erythrose 4-phosphate and phosphoenolpyruvate: step 1/7. Stereospecific condensation of phosphoenolpyruvate (PEP) and D-erythrose-4-phosphate (E4P) giving rise to 3-deoxy-D-arabino-heptulosonate-7-phosphate (DAHP). This is Phospho-2-dehydro-3-deoxyheptonate aldolase (aroG) from Corynebacterium glutamicum (strain ATCC 13032 / DSM 20300 / JCM 1318 / BCRC 11384 / CCUG 27702 / LMG 3730 / NBRC 12168 / NCIMB 10025 / NRRL B-2784 / 534).